The following is a 251-amino-acid chain: LexA repressor (251 aa).

Residues 26 to 46 (FDEMKDALGLKSKSGIHRLIK) constitute a DNA-binding region (H-T-H motif). Catalysis depends on for autocatalytic cleavage activity residues S172 and K210.

This sequence belongs to the peptidase S24 family. Homodimer.

The enzyme catalyses Hydrolysis of Ala-|-Gly bond in repressor LexA.. Its function is as follows. Represses a number of genes involved in the response to DNA damage (SOS response), including recA and lexA. In the presence of single-stranded DNA, RecA interacts with LexA causing an autocatalytic cleavage which disrupts the DNA-binding part of LexA, leading to derepression of the SOS regulon and eventually DNA repair. The sequence is that of LexA repressor from Rhodospirillum rubrum (strain ATCC 11170 / ATH 1.1.1 / DSM 467 / LMG 4362 / NCIMB 8255 / S1).